Reading from the N-terminus, the 293-residue chain is uncharacterized protein (293 aa).

Disordered regions lie at residues 1 to 23 (MGWPPAQKPEDSKEEHGGPAQTD) and 52 to 83 (ELQSYSHTSESPVETKTPTTSSEEQDEQSELS). Residues 8–17 (KPEDSKEEHG) are compositionally biased toward basic and acidic residues. A compositionally biased stretch (polar residues) spans 52–71 (ELQSYSHTSESPVETKTPTT).

This is an uncharacterized protein from Mus musculus (Mouse).